The following is a 59-amino-acid chain: DNA-directed RNA polymerase subunit Rpo6 (59 aa).

The protein belongs to the archaeal Rpo6/eukaryotic RPB6 RNA polymerase subunit family. As to quaternary structure, part of the RNA polymerase complex.

The protein localises to the cytoplasm. It carries out the reaction RNA(n) + a ribonucleoside 5'-triphosphate = RNA(n+1) + diphosphate. Its function is as follows. DNA-dependent RNA polymerase (RNAP) catalyzes the transcription of DNA into RNA using the four ribonucleoside triphosphates as substrates. The protein is DNA-directed RNA polymerase subunit Rpo6 of Halorubrum lacusprofundi (strain ATCC 49239 / DSM 5036 / JCM 8891 / ACAM 34).